Consider the following 182-residue polypeptide: Ribosome-recycling factor (182 aa).

It belongs to the RRF family.

The protein localises to the cytoplasm. Functionally, responsible for the release of ribosomes from messenger RNA at the termination of protein biosynthesis. May increase the efficiency of translation by recycling ribosomes from one round of translation to another. The polypeptide is Ribosome-recycling factor (Thermosynechococcus vestitus (strain NIES-2133 / IAM M-273 / BP-1)).